The chain runs to 361 residues: Peptide chain release factor 1 (361 aa).

Gln236 is subject to N5-methylglutamine. Positions 285–309 are enriched in basic and acidic residues; it reads TAKDSARAADRKAQVGSGDRSERIR. Residues 285–313 form a disordered region; the sequence is TAKDSARAADRKAQVGSGDRSERIRTYNF.

The protein belongs to the prokaryotic/mitochondrial release factor family. Post-translationally, methylated by PrmC. Methylation increases the termination efficiency of RF1.

The protein localises to the cytoplasm. Peptide chain release factor 1 directs the termination of translation in response to the peptide chain termination codons UAG and UAA. The chain is Peptide chain release factor 1 from Methylorubrum populi (strain ATCC BAA-705 / NCIMB 13946 / BJ001) (Methylobacterium populi).